The sequence spans 284 residues: TnP I resolvase (284 aa).

One can recognise a Core-binding (CB) domain in the interval 1 to 84 (MDVAKQFSSY…SLAKFNEFLI (84 aa)). The Tyr recombinase domain maps to 107-282 (ASPTQIVELD…NQLQLKNKME (176 aa)). Residues arginine 145, lysine 170, histidine 234, arginine 237, and histidine 260 contribute to the active site. Tyrosine 269 functions as the O-(3'-phospho-DNA)-tyrosine intermediate in the catalytic mechanism.

It belongs to the 'phage' integrase family.

In terms of biological role, resolvase catalyzes the resolution (a site-specific recombination) of the cointegrated replicon to yield the final transposition products. This Bacillus thuringiensis protein is TnP I resolvase (tnpI).